The primary structure comprises 166 residues: Heavy metal-associated isoprenylated plant protein 45 (166 aa).

An HMA domain is found at 15–78 (LSIVELLVDM…MVKRTGRTAE (64 aa)). Cys-26 and Cys-29 together coordinate a metal cation. Cys-163 is modified (cysteine methyl ester). The S-farnesyl cysteine moiety is linked to residue Cys-163. A propeptide spans 164-166 (TIM) (removed in mature form).

Belongs to the HIPP family.

Its function is as follows. Heavy-metal-binding protein. In Arabidopsis thaliana (Mouse-ear cress), this protein is Heavy metal-associated isoprenylated plant protein 45.